The following is a 988-amino-acid chain: Squamosa promoter-binding-like protein 16 (988 aa).

The disordered stretch occupies residues 52-79 (GTPVDLTRPSKKVRSGSPGSGGGGGGNY). A compositionally biased stretch (gly residues) spans 69 to 78 (PGSGGGGGGN). Residues 79–156 (YPKCQVDNCK…DGHNRRRRKT (78 aa)) form an SBP-type zinc finger. Zn(2+) is bound by residues cysteine 82, cysteine 87, cysteine 104, histidine 107, cysteine 123, cysteine 126, histidine 130, and cysteine 142. Residues 139 to 155 (KRSCRRRLDGHNRRRRK) carry the Bipartite nuclear localization signal motif. Disordered regions lie at residues 240–262 (RKNP…SSPS) and 289–416 (GFGN…DTST). Composition is skewed to polar residues over residues 250-262 (NPQN…SSPS), 301-311 (LTSSDHSATTS), and 327-358 (RTSS…FTSS). The segment covering 368–379 (ASSTKYYSSASS) has biased composition (low complexity).

The cofactor is Zn(2+).

It localises to the nucleus. In terms of biological role, trans-acting factor that binds specifically to the consensus nucleotide sequence 5'-TNCGTACAA-3'. The chain is Squamosa promoter-binding-like protein 16 (SPL16) from Arabidopsis thaliana (Mouse-ear cress).